The chain runs to 507 residues: Fumarate hydratase, mitochondrial (507 aa).

A mitochondrion-targeting transit peptide spans 1 to 41 (MYRALRLLARSRRLLRVPSAGAAVSGEATTLPRCAPNVARM). Residues K58, K63, and K77 each carry the N6-acetyllysine; alternate modification. An N6-succinyllysine; alternate mark is found at K58, K63, and K77. T82 carries the post-translational modification Phosphothreonine. 2 positions are modified to N6-acetyllysine; alternate: K112 and K119. N6-succinyllysine; alternate occurs at positions 112 and 119. Substrate contacts are provided by residues 142–144 (SGT), 173–176 (HPND), and 183–185 (SSN). K210 carries the N6-acetyllysine modification. At K220 the chain carries N6-acetyllysine; alternate. Residue K220 is modified to N6-succinyllysine; alternate. Residue T231 coordinates substrate. The active-site Proton donor/acceptor is the H232. T233 carries the phosphothreonine modification. Residue K289 is modified to N6-acetyllysine; alternate. Residue K289 is modified to N6-succinyllysine; alternate. S362 is an active-site residue. Substrate contacts are provided by residues S363 and 368–370 (KVN). At S363 the chain carries Phosphoserine. N6-succinyllysine is present on residues K464 and K470. At K499 the chain carries N6-acetyllysine.

The protein belongs to the class-II fumarase/aspartase family. Fumarase subfamily. As to quaternary structure, homotetramer. Interacts with H2AZ1. In terms of processing, phosphorylation at Thr-233 by PRKDC in response to DNA damage promotes translocation to the nucleus and recruitment to DNA double-strand breaks (DSBs).

The protein resides in the mitochondrion. Its subcellular location is the cytoplasm. It localises to the cytosol. The protein localises to the nucleus. It is found in the chromosome. It catalyses the reaction (S)-malate = fumarate + H2O. It functions in the pathway carbohydrate metabolism; tricarboxylic acid cycle; (S)-malate from fumarate: step 1/1. Its function is as follows. Catalyzes the reversible stereospecific interconversion of fumarate to L-malate. Experiments in different species have demonstrated that specific isoforms of this protein act in defined pathways and favor one direction over the other. Functionally, catalyzes the hydration of fumarate to L-malate in the tricarboxylic acid (TCA) cycle to facilitate a transition step in the production of energy in the form of NADH. Catalyzes the dehydration of L-malate to fumarate. Fumarate metabolism in the cytosol plays a role during urea cycle and arginine metabolism; fumarate being a by-product of the urea cycle and amino-acid catabolism. Also plays a role in DNA repair by promoting non-homologous end-joining (NHEJ). In response to DNA damage and phosphorylation by PRKDC, translocates to the nucleus and accumulates at DNA double-strand breaks (DSBs): acts by catalyzing formation of fumarate, an inhibitor of KDM2B histone demethylase activity, resulting in enhanced dimethylation of histone H3 'Lys-36' (H3K36me2). In Mus musculus (Mouse), this protein is Fumarate hydratase, mitochondrial.